A 483-amino-acid polypeptide reads, in one-letter code: CBL-interacting serine/threonine-protein kinase 19 (483 aa).

A Protein kinase domain is found at 28 to 282 (YEMGRLLGHG…MPDIMETSWF (255 aa)). Residues 34-42 (LGHGTFAKV) and K57 each bind ATP. The Proton acceptor role is filled by D150. An activation loop region spans residues 168 to 197 (DFGLSAVSDQIRQDGLFHTFCGTPAYVAPE). A Phosphoserine modification is found at S172. At T186 the chain carries Phosphothreonine. Polar residues predominate over residues 313–322 (SVSGRSSTVS). A disordered region spans residues 313 to 338 (SVSGRSSTVSEPEDFESFDGRRRGGS). Residues 340–364 (PRPASLNAFDLISFSPGFDLSGLFE) enclose the NAF domain. Positions 367–396 (GEGSRFVSGAPVGQIISKLEEIARIVSFTV) are PPI. Residues 459–483 (NLSSENGQRVSGSRSLPSFLLSDTD) are disordered.

Belongs to the protein kinase superfamily. CAMK Ser/Thr protein kinase family. SNF1 subfamily. Mn(2+) serves as cofactor.

The catalysed reaction is L-seryl-[protein] + ATP = O-phospho-L-seryl-[protein] + ADP + H(+). It carries out the reaction L-threonyl-[protein] + ATP = O-phospho-L-threonyl-[protein] + ADP + H(+). CIPK serine-threonine protein kinases interact with CBL proteins. Binding of a CBL protein to the regulatory NAF domain of CIPK protein lead to the activation of the kinase in a calcium-dependent manner. This is CBL-interacting serine/threonine-protein kinase 19 (CIPK19) from Arabidopsis thaliana (Mouse-ear cress).